The primary structure comprises 198 residues: Small ribosomal subunit protein uS4 (198 aa).

One can recognise an S4 RNA-binding domain in the interval 88–153; that stretch reads LRLDNVMFRM…AQRYKDILEV (66 aa).

Belongs to the universal ribosomal protein uS4 family. Part of the 30S ribosomal subunit. Contacts protein S5. The interaction surface between S4 and S5 is involved in control of translational fidelity.

One of the primary rRNA binding proteins, it binds directly to 16S rRNA where it nucleates assembly of the body of the 30S subunit. Functionally, with S5 and S12 plays an important role in translational accuracy. This Lachnoclostridium phytofermentans (strain ATCC 700394 / DSM 18823 / ISDg) (Clostridium phytofermentans) protein is Small ribosomal subunit protein uS4.